The primary structure comprises 481 residues: Ribulose bisphosphate carboxylase large chain (481 aa).

The propeptide occupies 1 to 2; sequence MS. At proline 3 the chain carries N-acetylproline. Lysine 14 carries the N6,N6,N6-trimethyllysine modification. Asparagine 123 and threonine 173 together coordinate substrate. Lysine 175 (proton acceptor) is an active-site residue. Lysine 177 serves as a coordination point for substrate. Mg(2+)-binding residues include lysine 201, aspartate 203, and glutamate 204. Position 201 is an N6-carboxylysine (lysine 201). The active-site Proton acceptor is histidine 294. Substrate contacts are provided by arginine 295, histidine 327, and serine 379.

Belongs to the RuBisCO large chain family. Type I subfamily. As to quaternary structure, heterohexadecamer of 8 large chains and 8 small chains; disulfide-linked. The disulfide link is formed within the large subunit homodimers. The cofactor is Mg(2+). The disulfide bond which can form in the large chain dimeric partners within the hexadecamer appears to be associated with oxidative stress and protein turnover.

It is found in the plastid. The catalysed reaction is 2 (2R)-3-phosphoglycerate + 2 H(+) = D-ribulose 1,5-bisphosphate + CO2 + H2O. It carries out the reaction D-ribulose 1,5-bisphosphate + O2 = 2-phosphoglycolate + (2R)-3-phosphoglycerate + 2 H(+). Functionally, ruBisCO catalyzes two reactions: the carboxylation of D-ribulose 1,5-bisphosphate, the primary event in carbon dioxide fixation, as well as the oxidative fragmentation of the pentose substrate in the photorespiration process. Both reactions occur simultaneously and in competition at the same active site. In Cuscuta gronovii (Common dodder), this protein is Ribulose bisphosphate carboxylase large chain.